A 216-amino-acid chain; its full sequence is MIVSTKLQDHFEKITKILSGFGVEGCISYGEITFSIRDQRDIHLILKKLKKEYLFEQLTDVTAVDYLTYGQSDWQVGKVVSQTGFSRGRQQDFKTAAVDNRFEIIYQLLSMANNVRIRVKCKLKDAQIILVDSVSDLWPSANWVEREVYDMFGIYFNNHPDLRRVLTDYGFVGHPLRKDFPQTGYVEMRYDENLGRVVYEPVEIDDRVNTPRVIRN.

Belongs to the complex I 30 kDa subunit family. NDH-1 is composed of 14 different subunits. Subunits NuoB, C, D, E, F, and G constitute the peripheral sector of the complex.

The protein localises to the cell inner membrane. The catalysed reaction is a quinone + NADH + 5 H(+)(in) = a quinol + NAD(+) + 4 H(+)(out). In terms of biological role, NDH-1 shuttles electrons from NADH, via FMN and iron-sulfur (Fe-S) centers, to quinones in the respiratory chain. The immediate electron acceptor for the enzyme in this species is believed to be ubiquinone. Couples the redox reaction to proton translocation (for every two electrons transferred, four hydrogen ions are translocated across the cytoplasmic membrane), and thus conserves the redox energy in a proton gradient. The polypeptide is NADH-quinone oxidoreductase subunit C (Francisella tularensis subsp. holarctica (strain FTNF002-00 / FTA)).